The chain runs to 158 residues: Transcription elongation factor GreA (158 aa).

Residues E5–Q75 adopt a coiled-coil conformation.

Belongs to the GreA/GreB family.

Functionally, necessary for efficient RNA polymerase transcription elongation past template-encoded arresting sites. The arresting sites in DNA have the property of trapping a certain fraction of elongating RNA polymerases that pass through, resulting in locked ternary complexes. Cleavage of the nascent transcript by cleavage factors such as GreA or GreB allows the resumption of elongation from the new 3'terminus. GreA releases sequences of 2 to 3 nucleotides. The chain is Transcription elongation factor GreA from Novosphingobium aromaticivorans (strain ATCC 700278 / DSM 12444 / CCUG 56034 / CIP 105152 / NBRC 16084 / F199).